The chain runs to 255 residues: ATP synthase subunit a (255 aa).

6 helical membrane passes run 28-48 (VDSLIMSFSLGALFCYLFWLG), 86-106 (IAPLALTIFCWIFLMNLMDLV), 125-145 (ILPTVDLNVTFALSISVFFLI), 164-184 (FHPFGPWLLPFNLILNIIELI), 203-223 (LIFILISLLPWWIQWALGTPW), and 224-244 (AIFHILVIPLQAFIFMMLTVV).

Belongs to the ATPase A chain family. F-type ATPases have 2 components, CF(1) - the catalytic core - and CF(0) - the membrane proton channel. CF(1) has five subunits: alpha(3), beta(3), gamma(1), delta(1), epsilon(1). CF(0) has three main subunits: a(1), b(2) and c(9-12). The alpha and beta chains form an alternating ring which encloses part of the gamma chain. CF(1) is attached to CF(0) by a central stalk formed by the gamma and epsilon chains, while a peripheral stalk is formed by the delta and b chains.

The protein resides in the cell inner membrane. Key component of the proton channel; it plays a direct role in the translocation of protons across the membrane. The sequence is that of ATP synthase subunit a from Alkalilimnicola ehrlichii (strain ATCC BAA-1101 / DSM 17681 / MLHE-1).